The chain runs to 379 residues: L-demethylnoviosyl transferase (379 aa).

This sequence belongs to the glycosyltransferase 28 family.

It carries out the reaction dTDP-4-O-demethyl-beta-L-noviose + novobiocic acid = desmethyldescarbamoylnovobiocin + dTDP + H(+). It functions in the pathway antibiotic biosynthesis; novobiocin biosynthesis. With respect to regulation, inhibited by TDP-L-rhamnose, the sugar donor that most closely structurally resembles the natural substrate dTDP-beta-L-noviose. In terms of biological role, catalyzes the transfer of L-noviose from dTDP-4-O-demethyl-beta-L-noviose to the phenolic oxygen of novobiocic acid, creating the full ABC ring system in the novobiocin biosynthesis pathway. Novobiocin is an aminocoumarin family antibiotic that targets bacterial DNA gyrases. Also shows activity with variant coumarin aglycones, suggesting it may be a promiscuous catalyst for noviosylation of a range of planar scaffolds. Does not show activity with TDP-L-rhamnose. The sequence is that of L-demethylnoviosyl transferase (novM) from Streptomyces niveus (Streptomyces spheroides).